A 181-amino-acid chain; its full sequence is Peptide methionine sulfoxide reductase MsrA (181 aa).

The active site involves Cys14.

It belongs to the MsrA Met sulfoxide reductase family.

The catalysed reaction is L-methionyl-[protein] + [thioredoxin]-disulfide + H2O = L-methionyl-(S)-S-oxide-[protein] + [thioredoxin]-dithiol. The enzyme catalyses [thioredoxin]-disulfide + L-methionine + H2O = L-methionine (S)-S-oxide + [thioredoxin]-dithiol. Has an important function as a repair enzyme for proteins that have been inactivated by oxidation. Catalyzes the reversible oxidation-reduction of methionine sulfoxide in proteins to methionine. This Bacillus licheniformis (strain ATCC 14580 / DSM 13 / JCM 2505 / CCUG 7422 / NBRC 12200 / NCIMB 9375 / NCTC 10341 / NRRL NRS-1264 / Gibson 46) protein is Peptide methionine sulfoxide reductase MsrA.